A 401-amino-acid chain; its full sequence is Lipid-A-disaccharide synthase (401 aa).

The protein belongs to the LpxB family.

It catalyses the reaction a lipid X + a UDP-2-N,3-O-bis[(3R)-3-hydroxyacyl]-alpha-D-glucosamine = a lipid A disaccharide + UDP + H(+). The protein operates within bacterial outer membrane biogenesis; LPS lipid A biosynthesis. Functionally, condensation of UDP-2,3-diacylglucosamine and 2,3-diacylglucosamine-1-phosphate to form lipid A disaccharide, a precursor of lipid A, a phosphorylated glycolipid that anchors the lipopolysaccharide to the outer membrane of the cell. The protein is Lipid-A-disaccharide synthase of Rhodospirillum centenum (strain ATCC 51521 / SW).